Here is a 217-residue protein sequence, read N- to C-terminus: Orotidine 5'-phosphate decarboxylase (217 aa).

Substrate is bound by residues Asp-14, Lys-36, 64–73 (DFKVADIPST), Ser-120, 172–182 (PGVGAQGGNLS), Gly-197, and Arg-198. Lys-66 functions as the Proton donor in the catalytic mechanism.

It belongs to the OMP decarboxylase family. Type 1 subfamily. In terms of assembly, homodimer.

It carries out the reaction orotidine 5'-phosphate + H(+) = UMP + CO2. The protein operates within pyrimidine metabolism; UMP biosynthesis via de novo pathway; UMP from orotate: step 2/2. Functionally, catalyzes the decarboxylation of orotidine 5'-monophosphate (OMP) to uridine 5'-monophosphate (UMP). This chain is Orotidine 5'-phosphate decarboxylase, found in Methanococcus maripaludis (strain C6 / ATCC BAA-1332).